A 332-amino-acid chain; its full sequence is Glycerol-3-phosphate dehydrogenase [NAD(P)+] (332 aa).

Positions 11, 12, 32, and 106 each coordinate NADPH. Lysine 106, glycine 137, and serine 139 together coordinate sn-glycerol 3-phosphate. Alanine 141 contributes to the NADPH binding site. Positions 192, 245, 255, 256, and 257 each coordinate sn-glycerol 3-phosphate. Residue lysine 192 is the Proton acceptor of the active site. Arginine 256 serves as a coordination point for NADPH. Positions 280 and 282 each coordinate NADPH.

Belongs to the NAD-dependent glycerol-3-phosphate dehydrogenase family.

Its subcellular location is the cytoplasm. The enzyme catalyses sn-glycerol 3-phosphate + NAD(+) = dihydroxyacetone phosphate + NADH + H(+). It catalyses the reaction sn-glycerol 3-phosphate + NADP(+) = dihydroxyacetone phosphate + NADPH + H(+). Its pathway is membrane lipid metabolism; glycerophospholipid metabolism. Catalyzes the reduction of the glycolytic intermediate dihydroxyacetone phosphate (DHAP) to sn-glycerol 3-phosphate (G3P), the key precursor for phospholipid synthesis. This Staphylococcus epidermidis (strain ATCC 35984 / DSM 28319 / BCRC 17069 / CCUG 31568 / BM 3577 / RP62A) protein is Glycerol-3-phosphate dehydrogenase [NAD(P)+].